Reading from the N-terminus, the 254-residue chain is MRFDILTLFPAMFTGPLTESILKRAAQAELLQFHLHDIRDYATDKHKMVDDSPTGGGAGMVMKPGPLALCTQTVLSADPNPAPVVLMTPSGRVFNQTIAREWAQLPRLVLVCGHYEGIDERYIERYVTDQVSLGDFVLTGGELAAMTIVDAVGRLVPEVLDPESLLHESHDDGLLEYPHYTKPAEWNGVAVPPILLSGHHAKIAQWRHEQRLRRTLERRPDMLRHATLSKKDRQLLKEWGWEEKSEGKNQKAEG.

Residues G113 and 133-138 (LGDFVL) each bind S-adenosyl-L-methionine.

The protein belongs to the RNA methyltransferase TrmD family. Homodimer.

Its subcellular location is the cytoplasm. The enzyme catalyses guanosine(37) in tRNA + S-adenosyl-L-methionine = N(1)-methylguanosine(37) in tRNA + S-adenosyl-L-homocysteine + H(+). Its function is as follows. Specifically methylates guanosine-37 in various tRNAs. The sequence is that of tRNA (guanine-N(1)-)-methyltransferase from Herpetosiphon aurantiacus (strain ATCC 23779 / DSM 785 / 114-95).